The primary structure comprises 238 residues: MSVLIVTGTGTEVGKTVVTAALAALAADRGTAVAVVKPAQTGVRAGELGDVDLVRDLSGVDDVHELSRYADPLAPVSAARRAGLPTPDLGTVAVAVRRLQADRGLVLVEGAGGLLVRYDHDGSTLADLARTLAAPVLVVTTAGLGTLNATALTLEVMANRGLDLAGIVVGSWPVEPDLAARSNIVDLELLAARPLAGAVPAGAGLLGTGQFLQIARSSLEPALGGAFNAAEFRRRYAV.

12–17 (EVGKTV) lines the ATP pocket. Thr-16 is a binding site for Mg(2+). Lys-37 is an active-site residue. A substrate-binding site is contributed by Thr-41. Residues Asp-50, 109-112 (EGAG), 170-171 (GS), and 200-202 (PAG) each bind ATP. Residues Asp-50 and Glu-109 each contribute to the Mg(2+) site.

Belongs to the dethiobiotin synthetase family. As to quaternary structure, homodimer. Requires Mg(2+) as cofactor.

It is found in the cytoplasm. The enzyme catalyses (7R,8S)-7,8-diammoniononanoate + CO2 + ATP = (4R,5S)-dethiobiotin + ADP + phosphate + 3 H(+). It functions in the pathway cofactor biosynthesis; biotin biosynthesis; biotin from 7,8-diaminononanoate: step 1/2. Catalyzes a mechanistically unusual reaction, the ATP-dependent insertion of CO2 between the N7 and N8 nitrogen atoms of 7,8-diaminopelargonic acid (DAPA, also called 7,8-diammoniononanoate) to form a ureido ring. This chain is ATP-dependent dethiobiotin synthetase BioD, found in Parafrankia sp. (strain EAN1pec).